A 203-amino-acid polypeptide reads, in one-letter code: Ribosomal RNA large subunit methyltransferase E (203 aa).

S-adenosyl-L-methionine is bound by residues glycine 51, tryptophan 53, aspartate 69, aspartate 85, and aspartate 108. Lysine 148 acts as the Proton acceptor in catalysis.

The protein belongs to the class I-like SAM-binding methyltransferase superfamily. RNA methyltransferase RlmE family.

The protein localises to the cytoplasm. It carries out the reaction uridine(2552) in 23S rRNA + S-adenosyl-L-methionine = 2'-O-methyluridine(2552) in 23S rRNA + S-adenosyl-L-homocysteine + H(+). Specifically methylates the uridine in position 2552 of 23S rRNA at the 2'-O position of the ribose in the fully assembled 50S ribosomal subunit. This Methanocorpusculum labreanum (strain ATCC 43576 / DSM 4855 / Z) protein is Ribosomal RNA large subunit methyltransferase E.